We begin with the raw amino-acid sequence, 114 residues long: Macrophage migration inhibitory factor homolog (114 aa).

Pro-2 serves as the catalytic Proton acceptor; via imino nitrogen. Substrate contacts are provided by Lys-33 and Ile-65.

The protein belongs to the MIF family.

The protein resides in the secreted. It catalyses the reaction L-dopachrome = 5,6-dihydroxyindole-2-carboxylate. The enzyme catalyses 3-phenylpyruvate = enol-phenylpyruvate. Its function is as follows. Tautomerization of the methyl ester of L-dopachrome. Inhibits migration of human peripheral blood mononuclear cells. The chain is Macrophage migration inhibitory factor homolog from Trichinella spiralis (Trichina worm).